Reading from the N-terminus, the 168-residue chain is Photosystem I assembly protein Ycf3 (168 aa).

TPR repeat units follow at residues 35–68 (AFTY…EIDP), 72–105 (SYIL…NPFL), and 120–153 (GEQA…TPGN).

The protein belongs to the Ycf3 family.

Its subcellular location is the plastid. The protein resides in the chloroplast thylakoid membrane. Essential for the assembly of the photosystem I (PSI) complex. May act as a chaperone-like factor to guide the assembly of the PSI subunits. This Coffea arabica (Arabian coffee) protein is Photosystem I assembly protein Ycf3.